Consider the following 252-residue polypeptide: TLC domain-containing protein 1 (252 aa).

An N-terminal signal peptide occupies residues 1-29 (MGPGWRAPSAALVGGSVALFGALRRAALA). At 30 to 47 (LPRPAAVRSRPGRVWRWR) the chain is on the extracellular side. Positions 41–235 (GRVWRWRNLL…LLRSDFFPSL (195 aa)) constitute a TLC domain. A helical transmembrane segment spans residues 48–68 (NLLVSFAHSVLAGLWALFSLW). The Cytoplasmic portion of the chain corresponds to 69–84 (QSPELLSDIQDGYSVS). Residues 85–105 (GHLLVCFSSGYFIHDSLDIIF) traverse the membrane as a helical segment. Residues 106 to 124 (NQQSRSSWEYLVHHAMAIS) lie on the Extracellular side of the membrane. An intramembrane region (helical) is located at residues 125–145 (AFVSLIITGRFLVAAMLLLLV). Topologically, residues 146 to 174 (EVSNIFLTIRMLLKMSNVPSPALYEANKY) are extracellular. The helical transmembrane segment at 175-195 (VNLVMYFAFRLAPQVYLTWYF) threads the bilayer. Residues 196–202 (VRYVEVQ) are Cytoplasmic-facing. The chain crosses the membrane as a helical span at residues 203–223 (GQGAFLMANLLLLDAMILMYF). The Extracellular portion of the chain corresponds to 224 to 252 (SRLLRSDFFPSLRKGSVGRDVDGEKFLID).

Interacts with CACNA1C in vitro; however the relevance of the interaction in vivo is unclear.

The protein resides in the cell membrane. In terms of biological role, regulates the composition and fluidity of the plasma membrane. Inhibits the incorporation of membrane-fluidizing phospholipids containing omega-3 long-chain polyunsaturated fatty acids (LCPUFA) and thereby promotes membrane rigidity. Does not appear to have any effect on LCPUFA synthesis. In Gallus gallus (Chicken), this protein is TLC domain-containing protein 1 (TLCD1).